A 96-amino-acid polypeptide reads, in one-letter code: UPF0125 protein YfjF (96 aa).

The protein belongs to the UPF0125 (RnfH) family.

The protein is UPF0125 protein YfjF (yfjF) of Escherichia coli O157:H7.